A 500-amino-acid chain; its full sequence is MATARVSLILLVVVLAASACAEGLRLPRDAKFPAAQAERLIRSLNLLPKEAGPTGAGDVPSVAPGELLERRVTLPGLPQGVGDLGHHAGYYRLPNTHDARMFYFLFESRGKKEDPVVIWLTGGPGCSSELAVFYENGPFTISNNMSLAWNKFGWDTISNIIFVDQPTGTGFSYSSDDRDTRHDETGVSNDLYSFLQVFFKKHPEFAKNDFFITGESYAGHYIPAFASRVHQGNKANEGIHINLKGFAIGNGLTDPAIQYKAYTDYALDMNLIKKSDYDRINKFIPPCEFAIKLCGTNGKASCMAAYMVCNSIFSSIMKLVGTKNYYDVRKECEGKLCYDFSNLEKFFGDKAVKEAIGVGDLEFVSCSTTVYQAMLTDWMRNLEVGIPALLEDGINVLIYAGEYDLICNWLGNSRWVHSMEWSGQKDFVSSHESPFVVDGAEAGVLKSHGPLSFLKVHNAGHMVPMDQPKASLEMLRRFTQGKLKEEWLAELPEQPMYAAM.

The first 21 residues, 1–21, serve as a signal peptide directing secretion; the sequence is MATARVSLILLVVVLAASACA. Positions 22-73 are excised as a propeptide; it reads EGLRLPRDAKFPAAQAERLIRSLNLLPKEAGPTGAGDVPSVAPGELLERRVT. Cystine bridges form between Cys-126/Cys-366, Cys-294/Cys-309, and Cys-332/Cys-337. Asn-144 carries N-linked (GlcNAc...) asparagine glycosylation. The active site involves Ser-216. Asp-404 is an active-site residue. Cys-407 is a substrate binding site. The active site involves His-461. A propeptide spanning residues 485 to 500 is cleaved from the precursor; sequence EEWLAELPEQPMYAAM.

Belongs to the peptidase S10 family. Monomer.

It carries out the reaction Release of a C-terminal amino acid with broad specificity.. This chain is Serine carboxypeptidase 3 (CBP3), found in Oryza sativa subsp. japonica (Rice).